The following is a 345-amino-acid chain: Probable dual-specificity RNA methyltransferase RlmN (345 aa).

Glutamate 93 serves as the catalytic Proton acceptor. Residues 99 to 326 (DDERATLCIS…TTIRASRGED (228 aa)) enclose the Radical SAM core domain. Cysteine 106 and cysteine 331 form a disulfide bridge. Positions 113, 117, and 120 each coordinate [4Fe-4S] cluster. Residues 158–159 (GE), serine 190, 212–214 (SLH), and histidine 288 each bind S-adenosyl-L-methionine. Cysteine 331 (S-methylcysteine intermediate) is an active-site residue.

This sequence belongs to the radical SAM superfamily. RlmN family. [4Fe-4S] cluster is required as a cofactor.

The protein resides in the cytoplasm. It catalyses the reaction adenosine(2503) in 23S rRNA + 2 reduced [2Fe-2S]-[ferredoxin] + 2 S-adenosyl-L-methionine = 2-methyladenosine(2503) in 23S rRNA + 5'-deoxyadenosine + L-methionine + 2 oxidized [2Fe-2S]-[ferredoxin] + S-adenosyl-L-homocysteine. It carries out the reaction adenosine(37) in tRNA + 2 reduced [2Fe-2S]-[ferredoxin] + 2 S-adenosyl-L-methionine = 2-methyladenosine(37) in tRNA + 5'-deoxyadenosine + L-methionine + 2 oxidized [2Fe-2S]-[ferredoxin] + S-adenosyl-L-homocysteine. Functionally, specifically methylates position 2 of adenine 2503 in 23S rRNA and position 2 of adenine 37 in tRNAs. The protein is Probable dual-specificity RNA methyltransferase RlmN of Bacteroides thetaiotaomicron (strain ATCC 29148 / DSM 2079 / JCM 5827 / CCUG 10774 / NCTC 10582 / VPI-5482 / E50).